Reading from the N-terminus, the 1794-residue chain is Non-reducing polyketide synthase nscA (1794 aa).

The N-terminal acylcarrier protein transacylase domain (SAT) stretch occupies residues 19-256 (DLKDLFRRLH…PLPVYDGLCH (238 aa)). In terms of domain architecture, Ketosynthase family 3 (KS3) spans 389–822 (ASKLAIVGMA…GGNTTVLLED (434 aa)). Residues 427 to 448 (PDRFDLNTHYDPTGKTENATQT) are disordered. Positions 428-440 (DRFDLNTHYDPTG) are enriched in basic and acidic residues. Catalysis depends on for beta-ketoacyl synthase activity residues Cys562, His697, and His740. The interval 928-1249 (FTGQGAYYSG…LVTLHLAGLT (322 aa)) is malonyl-CoA:ACP transacylase (MAT) domain. The segment at 1314-1633 (TSLVHQITAE…RLLMDRFFSP (320 aa)) is product template (PT) domain. The tract at residues 1318-1454 (HQITAETVEA…GVVRFEDPAA (137 aa)) is N-terminal hotdog fold. The PKS/mFAS DH domain maps to 1318–1628 (HQITAETVEA…FRRVPRLLMD (311 aa)). His1350 functions as the Proton acceptor; for dehydratase activity in the catalytic mechanism. The C-terminal hotdog fold stretch occupies residues 1482–1628 (ASKLSKPLAY…FRRVPRLLMD (147 aa)). Catalysis depends on Asp1539, which acts as the Proton donor; for dehydratase activity. Disordered stretches follow at residues 1637-1665 (SHAE…EAPA) and 1682-1718 (ASKS…GDPV). 2 stretches are compositionally biased toward polar residues: residues 1644 to 1655 (QETAPSATSVKK) and 1685 to 1701 (SEVS…QESP). One can recognise a Carrier domain in the interval 1717 to 1794 (PVDAGVVGQC…EMTAWLEEYC (78 aa)). Ser1754 is modified (O-(pantetheine 4'-phosphoryl)serine).

Requires pantetheine 4'-phosphate as cofactor.

The protein operates within secondary metabolite biosynthesis. Non-reducing polyketide synthase; part of the gene cluster that mediates the biosynthesis of neosartoricin, a prenylated anthracenone that exhibits T-cell antiproliferative activity, suggestive of a physiological role as an immunosuppressive agent. The non-reducing polyketide synthase nscA probably synthesizes and cyclizes the decaketide backbone. The hydrolase nscB then mediates the product release through hydrolysis followed by spontaneous decarboxylation. The prenyltransferase nscD catalyzes the addition of the dimethylallyl group to the aromatic C5. The FAD-dependent monooxygenase nscC is then responsible for the stereospecific hydroxylation at C2. There is no gene encoding O-acetyltransferase in the nsc gene cluster; thus, the last step of 2-O-acetylation leading to neosartoricin may be catalyzed by an unidentified O-acetyltransferase. This Neosartorya fischeri (strain ATCC 1020 / DSM 3700 / CBS 544.65 / FGSC A1164 / JCM 1740 / NRRL 181 / WB 181) (Aspergillus fischerianus) protein is Non-reducing polyketide synthase nscA.